The chain runs to 1020 residues: Probable beta-galactosidase B (1020 aa).

An N-terminal signal peptide occupies residues 1 to 22 (MLISKTVLSGLALGASFVGVSA). The N-linked (GlcNAc...) asparagine glycan is linked to asparagine 25. Tyrosine 90 is a substrate binding site. The N-linked (GlcNAc...) asparagine glycan is linked to asparagine 111. Residues asparagine 135, alanine 136, and glutamate 137 each contribute to the substrate site. A glycan (N-linked (GlcNAc...) asparagine) is linked at asparagine 172. Asparagine 195 contributes to the substrate binding site. The Proton donor role is filled by glutamate 196. N-linked (GlcNAc...) asparagine glycans are attached at residues asparagine 210 and asparagine 251. Tyrosine 264 serves as a coordination point for substrate. The cysteines at positions 270 and 323 are disulfide-linked. The N-linked (GlcNAc...) asparagine glycan is linked to asparagine 271. The Nucleophile role is filled by glutamate 307. Tyrosine 372 contacts substrate. Asparagine 410, asparagine 455, asparagine 549, asparagine 596, asparagine 625, asparagine 702, asparagine 747, asparagine 785, asparagine 819, asparagine 880, and asparagine 919 each carry an N-linked (GlcNAc...) asparagine glycan.

The protein belongs to the glycosyl hydrolase 35 family.

Its subcellular location is the secreted. It carries out the reaction Hydrolysis of terminal non-reducing beta-D-galactose residues in beta-D-galactosides.. Functionally, cleaves beta-linked terminal galactosyl residues from gangliosides, glycoproteins, and glycosaminoglycans. The chain is Probable beta-galactosidase B (lacB) from Aspergillus flavus (strain ATCC 200026 / FGSC A1120 / IAM 13836 / NRRL 3357 / JCM 12722 / SRRC 167).